Consider the following 504-residue polypeptide: Cobyric acid synthase (504 aa).

The 197-residue stretch at 258–454 folds into the GATase cobBQ-type domain; it reads EIEIAIIKLP…LHGIFENDEW (197 aa). Catalysis depends on Cys339, which acts as the Nucleophile. Residue His446 is part of the active site.

It belongs to the CobB/CobQ family. CobQ subfamily.

It participates in cofactor biosynthesis; adenosylcobalamin biosynthesis. Its function is as follows. Catalyzes amidations at positions B, D, E, and G on adenosylcobyrinic A,C-diamide. NH(2) groups are provided by glutamine, and one molecule of ATP is hydrogenolyzed for each amidation. This chain is Cobyric acid synthase, found in Prochlorococcus marinus (strain NATL2A).